The chain runs to 469 residues: ABHD16B (469 aa).

The AB hydrolase-1 domain occupies 174–298 (VICCEGNAGF…GLVVRTVREH (125 aa)). Catalysis depends on charge relay system residues Ser-247, Asp-322, and His-418.

This sequence belongs to the AB hydrolase superfamily. ABHD16 family.

It catalyses the reaction a 1,2-diacyl-sn-glycero-3-phospho-L-serine + H2O = a 2-acyl-sn-glycero-3-phospho-L-serine + a fatty acid + H(+). The catalysed reaction is a 1-acylglycerol + H2O = glycerol + a fatty acid + H(+). The enzyme catalyses 1-(9Z-octadecenoyl)-glycerol + H2O = glycerol + (9Z)-octadecenoate + H(+). Its function is as follows. Hydrolyzes the sn-1 position of glycerophospholipids with high specificity towards phosphatidylserine (PS), PS-PLA1 enzyme. Also hydrolyzes the acyl chain of glycerolipids with a preference for the monoacylglycerol (MAG) 1-acylglycerol, MAG lipase. Plays a regulatory role in cellular lipid homeostasis by modulating genes involved in neutral lipid degradation and in phospholipid synthesis and composition. In Homo sapiens (Human), this protein is ABHD16B.